A 170-amino-acid polypeptide reads, in one-letter code: Protein SprT (170 aa).

The SprT-like domain maps to 25–165 (SEQFFDRTFA…QYCKGRLEPV (141 aa)). A Zn(2+)-binding site is contributed by His-78. Glu-79 is an active-site residue. Residue His-82 participates in Zn(2+) binding.

It belongs to the SprT family. Requires Zn(2+) as cofactor.

The protein resides in the cytoplasm. This chain is Protein SprT, found in Actinobacillus succinogenes (strain ATCC 55618 / DSM 22257 / CCUG 43843 / 130Z).